A 452-amino-acid chain; its full sequence is Scaffold protein ILK (452 aa).

ANK repeat units follow at residues 2 to 30, 31 to 63, 64 to 96, 97 to 129, and 130 to 174; these read DDIF…LNQG, DDHG…INVM, NRGD…INAV, NEHG…VSIA, and NKYS…GTTR. One can recognise a Protein kinase domain in the interval 193 to 446; sequence LSLSQKLNEN…PKFDMIVPIL (254 aa). N200, N202, S204, H270, M272, and N279 together coordinate ATP. D339 is a Mg(2+) binding site. K341 serves as a coordination point for ATP. Positions 363-371 match the Nuclear localization signal motif; sequence KKPEEINRR.

The protein belongs to the protein kinase superfamily. TKL Ser/Thr protein kinase family. Interacts with PXN/PAXILLIN (via LD motif 4).

Its subcellular location is the cell junction. It is found in the focal adhesion. The protein resides in the cell membrane. The protein localises to the cell projection. It localises to the lamellipodium. Its subcellular location is the cytoplasm. It is found in the myofibril. The protein resides in the sarcomere. The protein localises to the nucleus. It localises to the cytoskeleton. Its subcellular location is the microtubule organizing center. It is found in the centrosome. The protein resides in the cell cortex. Its function is as follows. Scaffold protein which mediates protein-protein interactions during a range of cellular events including focal adhesion assembly, cell adhesion and cell migration. This Gallus gallus (Chicken) protein is Scaffold protein ILK.